A 132-amino-acid polypeptide reads, in one-letter code: Fluoride-specific ion channel FluC 2 (132 aa).

4 helical membrane passes run Leu12 to Leu32, Leu41 to Pro61, Leu65 to Ala85, and Ala96 to Phe116. 2 residues coordinate Na(+): Gly73 and Thr76.

Belongs to the fluoride channel Fluc/FEX (TC 1.A.43) family.

Its subcellular location is the cell inner membrane. It catalyses the reaction fluoride(in) = fluoride(out). With respect to regulation, na(+) is not transported, but it plays an essential structural role and its presence is essential for fluoride channel function. Its function is as follows. Fluoride-specific ion channel. Important for reducing fluoride concentration in the cell, thus reducing its toxicity. The protein is Fluoride-specific ion channel FluC 2 of Parasynechococcus marenigrum (strain WH8102).